Here is a 188-residue protein sequence, read N- to C-terminus: Elongation factor P (188 aa).

Residue Lys34 is modified to N6-(3,6-diaminohexanoyl)-5-hydroxylysine.

The protein belongs to the elongation factor P family. In terms of processing, is beta-lysylated on the epsilon-amino group of Lys-34 by the combined action of EpmA and EpmB, and then hydroxylated on the C5 position of the same residue by EpmC. Lysylation is critical for the stimulatory effect of EF-P on peptide-bond formation. The lysylation moiety would extend toward the peptidyltransferase center and stabilize the terminal 3-CCA end of the tRNA. The hydroxylation of the C5 position on Lys-34 would allow additional potential stabilizing hydrogen-bond interactions with the P-tRNA.

It localises to the cytoplasm. It functions in the pathway protein biosynthesis; polypeptide chain elongation. Its function is as follows. Involved in peptide bond synthesis. Alleviates ribosome stalling that occurs when 3 or more consecutive Pro residues or the sequence PPG is present in a protein, possibly by augmenting the peptidyl transferase activity of the ribosome. Modification of Lys-34 is required for alleviation. The chain is Elongation factor P from Shigella boydii serotype 18 (strain CDC 3083-94 / BS512).